We begin with the raw amino-acid sequence, 428 residues long: C4-dicarboxylate transport protein (428 aa).

8 helical membrane-spanning segments follow: residues 8–28 (SLYFQVLTAIAIGILLGHFYP), 44–64 (LIKMIIAPVIFCTVVTGIAGM), 76–96 (VALLYFEIVSTIALIIGLIIV), 142–162 (IGAFASGNILQVLLFAVLFGF), 184–206 (VIFGIINMIMRLAPIGALGAMAF), 222–242 (LIICFYITCILFVVLVLGSIA), 326–346 (IVHQITLLIVLLLSSKGAAGV), and 352–372 (IVLAATLSAVGHLPVAGLALI).

It belongs to the dicarboxylate/amino acid:cation symporter (DAACS) (TC 2.A.23) family.

The protein localises to the cell inner membrane. Responsible for the transport of dicarboxylates such as succinate, fumarate, and malate from the periplasm across the membrane. The polypeptide is C4-dicarboxylate transport protein (Shigella flexneri).